A 291-amino-acid chain; its full sequence is Pyridoxal kinase PdxY (291 aa).

Residues S9 and 44-45 each bind substrate; that span reads TQ. Residues D112, V144, E149, K182, and 207 to 210 contribute to the ATP site; that span reads RPHL. D221 lines the substrate pocket.

It belongs to the pyridoxine kinase family. PdxY subfamily. Homodimer. The cofactor is Mg(2+).

It catalyses the reaction pyridoxal + ATP = pyridoxal 5'-phosphate + ADP + H(+). Its pathway is cofactor metabolism; pyridoxal 5'-phosphate salvage; pyridoxal 5'-phosphate from pyridoxal: step 1/1. Pyridoxal kinase involved in the salvage pathway of pyridoxal 5'-phosphate (PLP). Catalyzes the phosphorylation of pyridoxal to PLP. The polypeptide is Pyridoxal kinase PdxY (Photobacterium profundum (strain SS9)).